The sequence spans 370 residues: Queuine tRNA-ribosyltransferase (370 aa).

The Proton acceptor role is filled by aspartate 89. Substrate is bound by residues 89–93 (DSGGF), aspartate 143, and glycine 214. Residues 245 to 251 (GVGKPED) are RNA binding. Aspartate 264 functions as the Nucleophile in the catalytic mechanism. The tract at residues 269-273 (TRNAR) is RNA binding; important for wobble base 34 recognition. Residues cysteine 302, cysteine 304, cysteine 307, and histidine 333 each contribute to the Zn(2+) site.

It belongs to the queuine tRNA-ribosyltransferase family. As to quaternary structure, homodimer. Within each dimer, one monomer is responsible for RNA recognition and catalysis, while the other monomer binds to the replacement base PreQ1. The cofactor is Zn(2+).

The enzyme catalyses 7-aminomethyl-7-carbaguanine + guanosine(34) in tRNA = 7-aminomethyl-7-carbaguanosine(34) in tRNA + guanine. It participates in tRNA modification; tRNA-queuosine biosynthesis. Catalyzes the base-exchange of a guanine (G) residue with the queuine precursor 7-aminomethyl-7-deazaguanine (PreQ1) at position 34 (anticodon wobble position) in tRNAs with GU(N) anticodons (tRNA-Asp, -Asn, -His and -Tyr). Catalysis occurs through a double-displacement mechanism. The nucleophile active site attacks the C1' of nucleotide 34 to detach the guanine base from the RNA, forming a covalent enzyme-RNA intermediate. The proton acceptor active site deprotonates the incoming PreQ1, allowing a nucleophilic attack on the C1' of the ribose to form the product. After dissociation, two additional enzymatic reactions on the tRNA convert PreQ1 to queuine (Q), resulting in the hypermodified nucleoside queuosine (7-(((4,5-cis-dihydroxy-2-cyclopenten-1-yl)amino)methyl)-7-deazaguanosine). This is Queuine tRNA-ribosyltransferase from Buchnera aphidicola subsp. Acyrthosiphon pisum (strain 5A).